The primary structure comprises 508 residues: MNHLWTHLWPGVGSLCLLLAGAAWASLPKPLDPKFESKAALLAARAPEELLCFTERLEDLVCFWEEAASAGVGPDNYSFFYQLEGEPWKTCSLHQAPTTRGAVRFWCSLPTADTSSFVPLELRATAVSSGALLYRRIIHINEVVLLDPPAGLLARRADEGGHVVLRWLPPPGAPVASLIRYEVNISGSVAGGSQKVEILDGRTECVLSNLRGGTRYTFMVRARMAEPSFGGFWSAWSEPASLLTASDLDPLILTLSLILVLILLLLAVLALLSHRRTLKQKIWPGIPSPESEFEGLFTTHKGNFQLWLYQNEGCLWWSPCTPLAEDPPAPLEVLSERCWGAPQAVEPGADDEGPLLEPVGSEHSQDTYLVLDKWLLPRNPSSEDVSQSGGSLDIVAMDKGSEASSCSSGLSLKPGPEGALGASFEYTILDPSSQLLCPRALPPELPPTPPHIKYLYLMVSDSGISTDYSSGGSQGAQGDSLNSPFLNPYENSLIPAPEPSPPGYVACS.

An N-terminal signal peptide occupies residues 1–24 (MNHLWTHLWPGVGSLCLLLAGAAW). The Extracellular segment spans residues 25–250 (ASLPKPLDPK…SLLTASDLDP (226 aa)). Cysteines 52 and 62 form a disulfide. Asparagine 76 carries N-linked (GlcNAc...) asparagine glycosylation. Cysteine 91 and cysteine 107 form a disulfide bridge. Residues 148 to 247 (PPAGLLARRA…EPASLLTASD (100 aa)) form the Fibronectin type-III domain. Residue asparagine 184 is glycosylated (N-linked (GlcNAc...) asparagine). Residues 233–237 (WSAWS) carry the WSXWS motif motif. A helical membrane pass occupies residues 251-273 (LILTLSLILVLILLLLAVLALLS). Over 274-508 (HRRTLKQKIW…PSPPGYVACS (235 aa)) the chain is Cytoplasmic. Residue lysine 281 forms a Glycyl lysine isopeptide (Lys-Gly) (interchain with G-Cter in ubiquitin) linkage. Residues 282 to 290 (IWPGIPSPE) carry the Box 1 motif motif. Phosphotyrosine; by JAK2 is present on residues tyrosine 368 and tyrosine 426. Residues 452-457 (IKYLYL) carry the ITIM motif motif. Lysine 453 participates in a covalent cross-link: Glycyl lysine isopeptide (Lys-Gly) (interchain with G-Cter in ubiquitin). Tyrosine 454, tyrosine 456, tyrosine 468, tyrosine 489, and tyrosine 504 each carry phosphotyrosine; by JAK2. A disordered region spans residues 467–508 (DYSSGGSQGAQGDSLNSPFLNPYENSLIPAPEPSPPGYVACS).

Belongs to the type I cytokine receptor family. Type 1 subfamily. Forms homodimers on EPO stimulation. The tyrosine-phosphorylated form interacts with several SH2 domain-containing proteins including LYN, the adapter protein SH2B2, PTPN6, PTPN11, JAK2, PI3 kinases, STAT5A/B, SOCS3, CRKL. Interacts with INPP5D/SHIP1. SH2B2 binding inhibits the JAK-STAT signaling. Interacts with RHEX; this interaction occurs in a erythropoietin (EPO)-dependent manner. Interacts with ATXN2L. In terms of processing, on EPO stimulation, phosphorylated on C-terminal tyrosine residues by JAK2. The phosphotyrosine motifs are also recruitment sites for several SH2-containing proteins and adapter proteins which mediate cell proliferation. Phosphorylation on Tyr-454 is required for PTPN6 interaction, Tyr-426 for PTPN11. Tyr-426 is also required for SOCS3 binding, but Tyr-454/Tyr-456 motif is the preferred binding site. Post-translationally, ubiquitinated by the ECS(SOCS2) complex following ligand-binding and phosphorylation by JAK2, leading to its degradation by the proteasome. Regulation by the ECS(SOCS2) complex acts as a negative feedback loop of erythropoietin-mediated signaling pathway. Ubiquitination at Lys-281 mediates receptor internalization, whereas ubiquitination at Lys-453 promotes trafficking of activated receptors to the lysosomes for degradation. Ubiquitinated by NOSIP; appears to be either multi-monoubiquitinated or polyubiquitinated. Ubiquitination mediates proliferation and survival of EPO-dependent cells.

The protein localises to the cell membrane. Its function is as follows. Receptor for erythropoietin, which mediates erythropoietin-induced erythroblast proliferation and differentiation. Upon EPO stimulation, EPOR dimerizes triggering the JAK2/STAT5 signaling cascade. In some cell types, can also activate STAT1 and STAT3. May also activate the LYN tyrosine kinase. Isoform EPOR-T acts as a dominant-negative receptor of EPOR-mediated signaling. In Canis lupus familiaris (Dog), this protein is Erythropoietin receptor (EPOR).